Reading from the N-terminus, the 198-residue chain is Acireductone dioxygenase 2 (198 aa).

4 residues coordinate Fe(2+): histidine 99, histidine 101, glutamate 105, and histidine 144. Ni(2+) contacts are provided by histidine 99, histidine 101, glutamate 105, and histidine 144.

This sequence belongs to the acireductone dioxygenase (ARD) family. Requires Fe(2+) as cofactor. It depends on Ni(2+) as a cofactor. Ubiquitous.

It localises to the cytoplasm. Its subcellular location is the nucleus. It carries out the reaction 1,2-dihydroxy-5-(methylsulfanyl)pent-1-en-3-one + O2 = 4-methylsulfanyl-2-oxobutanoate + formate + 2 H(+). It catalyses the reaction 1,2-dihydroxy-5-(methylsulfanyl)pent-1-en-3-one + O2 = 3-(methylsulfanyl)propanoate + CO + formate + 2 H(+). Its pathway is amino-acid biosynthesis; L-methionine biosynthesis via salvage pathway; L-methionine from S-methyl-5-thio-alpha-D-ribose 1-phosphate: step 5/6. Its function is as follows. Catalyzes 2 different reactions between oxygen and the acireductone 1,2-dihydroxy-3-keto-5-methylthiopentene (DHK-MTPene) depending upon the metal bound in the active site. Fe-containing acireductone dioxygenase (Fe-ARD) produces formate and 2-keto-4-methylthiobutyrate (KMTB), the alpha-ketoacid precursor of methionine in the methionine recycle pathway. Ni-containing acireductone dioxygenase (Ni-ARD) produces methylthiopropionate, carbon monoxide and formate, and does not lie on the methionine recycle pathway. This is Acireductone dioxygenase 2 (ARD2) from Oryza sativa subsp. indica (Rice).